The chain runs to 152 residues: Globin-1 subunit beta (152 aa).

Ser2 bears the N-acetylserine mark. One can recognise a Globin domain in the interval 12 to 152; sequence VSNADQKDLL…SLVAVVQAAL (141 aa). The heme b site is built by His72 and His104.

It belongs to the globin family. As to quaternary structure, heterotetramer of two alpha chains and two beta chains.

This Anadara trapezia (Sydney cockle) protein is Globin-1 subunit beta.